Here is a 289-residue protein sequence, read N- to C-terminus: Rhodopsin (289 aa).

Over 1-7 (YLVSPAA) the chain is Extracellular. The chain crosses the membrane as a helical span at residues 8–32 (YAALGAYMFLLILVGFPVNFLTLYV). The Cytoplasmic portion of the chain corresponds to 33-44 (TLDHKKLRTPLN). The chain crosses the membrane as a helical span at residues 45–67 (YILLNLAVADLFMVLGGFTTTMY). The Extracellular segment spans residues 68 to 81 (TSMHGYFVLGRLGC). A disulfide bond links Cys81 and Cys158. Residues 82–104 (NLEGFFATLGGEIALWSLVVLAI) form a helical membrane-spanning segment. A 'Ionic lock' involved in activated form stabilization motif is present at residues 105–107 (ERW). Topologically, residues 105–123 (ERWIVVCKPISNFRFTEDH) are cytoplasmic. A helical transmembrane segment spans residues 124–144 (AIMGLAFSWVMALTCAVPPLV). At 145–173 (GWSRYIPEGMQCSCGVDYYTRAEGFNTES) the chain is on the extracellular side. The helical transmembrane segment at 174-195 (FVLYMFTVHFLIPLSVIFFCYG) threads the bilayer. The Cytoplasmic portion of the chain corresponds to 196 to 223 (RLLCAVKEAAAAQQESETTQRAEKEVSR). A helical transmembrane segment spans residues 224–245 (MVVLMVIGFLVCWLPYASVAWW). The Extracellular segment spans residues 246–257 (IFCNQGSEFGPI). The chain crosses the membrane as a helical span at residues 258–279 (FMTLPAFFAKTSAIYNPLIYIC). Position 267 is an N6-(retinylidene)lysine (Lys267). Residues 280 to 289 (MNKQFRHCMI) lie on the Cytoplasmic side of the membrane.

The protein belongs to the G-protein coupled receptor 1 family. Opsin subfamily. In terms of processing, phosphorylated on some or all of the serine and threonine residues present in the C-terminal region. Post-translationally, contains one covalently linked retinal chromophore.

The protein resides in the membrane. It localises to the cell projection. Its subcellular location is the cilium. The protein localises to the photoreceptor outer segment. In terms of biological role, photoreceptor required for image-forming vision at low light intensity. While most salt water fish species use retinal as chromophore, most freshwater fish use 3-dehydroretinal, or a mixture of retinal and 3-dehydroretinal. Light-induced isomerization of 11-cis to all-trans retinal triggers a conformational change that activates signaling via G-proteins. Subsequent receptor phosphorylation mediates displacement of the bound G-protein alpha subunit by arrestin and terminates signaling. The protein is Rhodopsin (rho) of Procottus jeittelesii (Red sculpin).